A 215-amino-acid chain; its full sequence is Oligoribonuclease (215 aa).

One can recognise an Exonuclease domain in the interval 5–170 (LVWIDCEMTG…ADIHESIREL (166 aa)). Tyr127 is a catalytic residue. Positions 196–215 (LSDGAGAQEETDSAEAPQSG) are disordered.

This sequence belongs to the oligoribonuclease family.

It is found in the cytoplasm. Functionally, 3'-to-5' exoribonuclease specific for small oligoribonucleotides. The polypeptide is Oligoribonuclease (Mycobacterium bovis (strain BCG / Pasteur 1173P2)).